Here is a 376-residue protein sequence, read N- to C-terminus: Cyclin-D3-1 (376 aa).

The segment at 298–376 (KRKSHDSSSS…HLPWAIVATP (79 aa)) is disordered. A compositionally biased stretch (low complexity) spans 321–349 (NSDESSNDSWSASSCNPPTSSSSPQQQPP). Positions 354–363 (RGAEENEKKK) are enriched in basic and acidic residues.

It belongs to the cyclin family. Cyclin D subfamily. In terms of assembly, interacts with the C-terminal domain of CDKA-1. Interacts with KRP1/ICK1. Interacts with KRP6. Post-translationally, phosphorylated. In terms of tissue distribution, highly expressed in roots and at lower levels in leaves and flowers. Expressed in vegetative shoot meristem and inflorescence.

Its function is as follows. Involved in the control of the cell cycle at the G1/S (start) transition. Activates the G1/S phase transition in response to cytokinin hormone signal, but declines in response to sucrose starvation leading to G1 arrest. Involved in the induction of mitotic cell division. Plays an important role in the switch from cell proliferation to the final stages of differentiation during plant development. May not be involved in the activation of cell cycle in the root apical meristem (RAM) in the early phase of seed germination. Promotes divisions in the guard cells (GCs) after the guard mother cells (GMC) symmetric division. The polypeptide is Cyclin-D3-1 (CYCD3-1) (Arabidopsis thaliana (Mouse-ear cress)).